Consider the following 143-residue polypeptide: ATP synthase subunit b', chloroplastic (143 aa).

The helical transmembrane segment at 12-31 (LPVMGLQVVLLSWLLEQILY) threads the bilayer.

This sequence belongs to the ATPase B chain family. F-type ATPases have 2 components, F(1) - the catalytic core - and F(0) - the membrane proton channel. F(1) has five subunits: alpha(3), beta(3), gamma(1), delta(1), epsilon(1). F(0) has four main subunits: a(1), b(1), b'(1) and c(10-14). The alpha and beta chains form an alternating ring which encloses part of the gamma chain. F(1) is attached to F(0) by a central stalk formed by the gamma and epsilon chains, while a peripheral stalk is formed by the delta, b and b' chains.

The protein resides in the plastid. The protein localises to the chloroplast thylakoid membrane. Its function is as follows. F(1)F(0) ATP synthase produces ATP from ADP in the presence of a proton or sodium gradient. F-type ATPases consist of two structural domains, F(1) containing the extramembraneous catalytic core and F(0) containing the membrane proton channel, linked together by a central stalk and a peripheral stalk. During catalysis, ATP synthesis in the catalytic domain of F(1) is coupled via a rotary mechanism of the central stalk subunits to proton translocation. Component of the F(0) channel, it forms part of the peripheral stalk, linking F(1) to F(0). The b'-subunit is a diverged and duplicated form of b found in plants and photosynthetic bacteria. The chain is ATP synthase subunit b', chloroplastic from Cyanidioschyzon merolae (strain NIES-3377 / 10D) (Unicellular red alga).